The primary structure comprises 294 residues: Peroxidase-like protein 3 (294 aa).

N-linked (GlcNAc...) asparagine glycosylation occurs at Asn129.

This sequence belongs to the peroxidase family. Component of the acid-insoluble and acid-soluble organic matrix of calcified layers of the shell (at protein level).

It localises to the secreted. This is Peroxidase-like protein 3 from Lottia gigantea (Giant owl limpet).